A 174-amino-acid chain; its full sequence is NADH-quinone oxidoreductase subunit I (174 aa).

2 4Fe-4S ferredoxin-type domains span residues leucine 44–aspartate 74 and arginine 90–aspartate 119. Residues cysteine 54, cysteine 57, cysteine 60, cysteine 64, cysteine 99, cysteine 102, cysteine 105, and cysteine 109 each contribute to the [4Fe-4S] cluster site.

This sequence belongs to the complex I 23 kDa subunit family. NDH-1 is composed of 14 different subunits. Subunits NuoA, H, J, K, L, M, N constitute the membrane sector of the complex. It depends on [4Fe-4S] cluster as a cofactor.

The protein localises to the cell membrane. It carries out the reaction a quinone + NADH + 5 H(+)(in) = a quinol + NAD(+) + 4 H(+)(out). Its function is as follows. NDH-1 shuttles electrons from NADH, via FMN and iron-sulfur (Fe-S) centers, to quinones in the respiratory chain. The immediate electron acceptor for the enzyme in this species is believed to be menaquinone. Couples the redox reaction to proton translocation (for every two electrons transferred, four hydrogen ions are translocated across the cytoplasmic membrane), and thus conserves the redox energy in a proton gradient. In Mycobacterium sp. (strain KMS), this protein is NADH-quinone oxidoreductase subunit I.